The sequence spans 506 residues: Subtilisin-like serine protease Cur l 4.0101 (506 aa).

An N-terminal signal peptide occupies residues 1-15 (MKYSLIAALPALAAA). Positions 16 to 135 (SPTFSTETIH…IERDSEVRIL (120 aa)) are cleaved as a propeptide — removed in mature form. Residues 43-134 (SYMVVFKKHV…YIERDSEVRI (92 aa)) form the Inhibitor I9 domain. Residues 59 to 79 (HDWVQSVHSKNTQERMELRKR) are disordered. Positions 69–79 (NTQERMELRKR) are enriched in basic and acidic residues. Residues 147 to 453 (PWGLARISHR…GGSSNYTDII (307 aa)) enclose the Peptidase S8 domain. Catalysis depends on charge relay system residues D183 and H215. 2 N-linked (GlcNAc...) asparagine glycosylation sites follow: N245 and N285. S381 (charge relay system) is an active-site residue. Residue N448 is glycosylated (N-linked (GlcNAc...) asparagine). A propeptide spans 459 to 506 (TVKKAASKEEEKESEFRITIPSLSELEDDFEKAKESAGRKAHHVGGKL) (removed in mature form).

The protein belongs to the peptidase S8 family.

Functionally, serine protease. This is Subtilisin-like serine protease Cur l 4.0101 from Cochliobolus lunatus (Filamentous fungus).